The chain runs to 656 residues: Phosphatidylinositol 4,5-bisphosphate-binding protein SLM2 (656 aa).

The PH domain maps to 445 to 555 (FEVKSGFLEK…WFGNIKALSS (111 aa)). The disordered stretch occupies residues 577–605 (AKSNENTTESVTPQVTNEQHTRYDDVSSS). Over residues 580–594 (NENTTESVTPQVTNE) the composition is skewed to polar residues. A Phosphoserine modification is found at Ser-626. The short motif at 640–645 (PEFYIE) is the PXIXIT-like, required for interaction with CNA1 and CNA2, and calcineurin-dependent dephosphorylation element. Residues Ser-649 and Ser-653 each carry the phosphoserine modification.

As to quaternary structure, heterodimer of SLM1-SLM2. Binds phosphatidylinositol 4,5-bisphosphate, which is required for function. Interacts with the TORC2 subunits AVO2, BIT61 and TOR2. Interacts with the calcineurin catalytic subunits CNA1 and CNA2.

It localises to the cell membrane. Functionally, together with SLM1, effector of the TORC2- and calcineurin-signaling pathways. Phosphorylated and activated by TORC2 under favorable growth conditions. Mediates actin polarization via inhibition of calcineurin-dependent transcription. Upon nutrient limitation or environmental stress, gets dephosphorylated by calcineurin, inhibiting interaction with TORC2, thereby antagonizing TORC2 signaling and mediating calcineurin-dependent actin depolarization. Also functions in heat-induced, calcineurin-mediated uracil permease (FUR4) endocytosis. The sequence is that of Phosphatidylinositol 4,5-bisphosphate-binding protein SLM2 (SLM2) from Saccharomyces cerevisiae (strain ATCC 204508 / S288c) (Baker's yeast).